Here is a 125-residue protein sequence, read N- to C-terminus: Transmembrane protein 14EP (125 aa).

A run of 2 helical transmembrane segments spans residues 9–29 (VPLYWLGFVYAALAALGGISG) and 81–101 (ILTLWNIYACGFSCRCLLIVS).

This sequence belongs to the TMEM14 family.

The protein resides in the membrane. This Homo sapiens (Human) protein is Transmembrane protein 14EP (TMEM14EP).